Here is an 835-residue protein sequence, read N- to C-terminus: Protein translocase subunit SecA (835 aa).

Residues Gln-85, 103–107 (GEGKT), and Asp-492 each bind ATP. The Zn(2+) site is built by Cys-819, Cys-821, Cys-830, and Cys-831.

It belongs to the SecA family. Monomer and homodimer. Part of the essential Sec protein translocation apparatus which comprises SecA, SecYEG and auxiliary proteins SecDF. Other proteins may also be involved. The cofactor is Zn(2+).

The protein resides in the cell membrane. It is found in the cytoplasm. It catalyses the reaction ATP + H2O + cellular proteinSide 1 = ADP + phosphate + cellular proteinSide 2.. Functionally, part of the Sec protein translocase complex. Interacts with the SecYEG preprotein conducting channel. Has a central role in coupling the hydrolysis of ATP to the transfer of proteins into and across the cell membrane, serving as an ATP-driven molecular motor driving the stepwise translocation of polypeptide chains across the membrane. The polypeptide is Protein translocase subunit SecA (Clostridium botulinum (strain Loch Maree / Type A3)).